The primary structure comprises 1174 residues: Male determiner protein Mdmd(III) (1174 aa).

The segment covering 1–15 (MNATDAESRKPENKP) has biased composition (basic and acidic residues). Disordered regions lie at residues 1–51 (MNAT…SGQR), 80–109 (KDGS…HPVE), and 136–259 (KQLS…LRRS). Positions 16–35 (SSESSSSGSTSGSSDGEVSS) are enriched in low complexity. Over residues 36–47 (KTYFKNNKSKVL) the composition is skewed to polar residues. The segment covering 80–92 (KDGSNEMLPKEDS) has biased composition (basic and acidic residues). Over residues 93–102 (INTNHNYTTD) the composition is skewed to polar residues. A compositionally biased stretch (low complexity) spans 138–153 (LSAYRSRSRSTRLSYS). Positions 167 to 180 (SRYKKSVLRNRRTS) are enriched in basic residues. The span at 183-200 (HGRDSSTTKRSVSRDKDN) shows a compositional bias: basic and acidic residues. The segment covering 201-223 (RLRRRIGSSRSHTRSHSRFRRSE) has biased composition (basic residues). The segment covering 235 to 259 (RSQERRHERRRSMSSDYERIALRRS) has biased composition (basic and acidic residues). An MIF4G domain is found at 348 to 531 (KKYIHGYINK…KVLFQVRRDG (184 aa)). The MI domain occupies 641-757 (ALRRTIYLTL…SWDVLDCIKL (117 aa)). A compositionally biased stretch (low complexity) spans 840–857 (SAPSSSSSSSLSSELSAP). Disordered regions lie at residues 840–1045 (SAPS…SRTK) and 1096–1133 (KDNY…NHSR). Residues 869 to 909 (KKKHKGKNKKMTKKKNPSKKKEKTKKFVGKNKIAAKNKTIK) are compositionally biased toward basic residues. Residues 910 to 924 (RRTDKDNSSSKDNFL) show a composition bias toward basic and acidic residues. The span at 926 to 957 (SESSSNESISLDSLSSELFAPSSYSSSESSND) shows a compositional bias: low complexity. Over residues 963 to 1001 (KHKGKNKKMTKKKNPSNKKEKTKKKLSKNKKAPNKNTKK) the composition is skewed to basic residues. Residues 1010-1020 (SSESSISESKS) are compositionally biased toward low complexity. Positions 1034-1045 (RKKRVTSKSRTK) are enriched in basic residues. Basic and acidic residues predominate over residues 1103–1118 (QNHEISQRHDSEIKRR). Residues 1119 to 1130 (REERKKRHHEKN) show a composition bias toward basic residues.

Belongs to the CWC22 family. As to quaternary structure, component of the spliceosome C complex.

Its subcellular location is the nucleus speckle. Male determiner protein (M-factor) that controls male somatic sexual differentiation. Acts as a dominant factor that regulates the mRNA splicing of transformer (tra) and doublesex (dsx) transcripts and promotes expression of male splice forms of tra and dsx. Probably acts as a component of the spliceosome C complex required for mRNA splicing factor and exon-junction complex (EJC) assembly. Hinders eIF4AIII from non-specifically binding RNA and escorts it to the splicing machinery to promote EJC assembly on mature mRNAs. In Musca domestica (House fly), this protein is Male determiner protein Mdmd(III).